We begin with the raw amino-acid sequence, 220 residues long: Iron-sulfur cluster repair protein YtfE (220 aa).

The protein belongs to the RIC family. YtfE subfamily. In terms of assembly, homodimer.

The protein localises to the cytoplasm. Functionally, di-iron-containing protein involved in the repair of iron-sulfur clusters damaged by oxidative and nitrosative stress conditions. The chain is Iron-sulfur cluster repair protein YtfE from Citrobacter koseri (strain ATCC BAA-895 / CDC 4225-83 / SGSC4696).